Here is a 168-residue protein sequence, read N- to C-terminus: Group IIF secretory phospholipase A2 (168 aa).

The N-terminal stretch at Met-1 to Gly-20 is a signal peptide. 7 disulfide bridges follow: Cys-46–Cys-138, Cys-48–Cys-64, Cys-63–Cys-120, Cys-69–Cys-145, Cys-70–Cys-113, Cys-79–Cys-106, and Cys-98–Cys-111. Residues Tyr-47, Gly-49, and Gly-51 each contribute to the Ca(2+) site. The active site involves His-67. Position 68 (Asp-68) interacts with Ca(2+). Asn-92 and Asn-102 each carry an N-linked (GlcNAc...) asparagine glycan. The active site involves Asp-114. Asn-123 and Asn-144 each carry an N-linked (GlcNAc...) asparagine glycan. Residues Gln-139 to Pro-168 form a required for localization on the plasma membrane region.

It belongs to the phospholipase A2 family. Requires Ca(2+) as cofactor. Expressed at high levels in placenta, testis, thymus and at lower levels in heart, kidney, liver and prostate. Highly expressed in rheumatoid arthritic tissues, including synovial lining cells in the intima, capillary endothelial cells and plasma cells.

It is found in the secreted. The protein resides in the cell membrane. It catalyses the reaction a 1,2-diacyl-sn-glycero-3-phosphocholine + H2O = a 1-acyl-sn-glycero-3-phosphocholine + a fatty acid + H(+). The enzyme catalyses 1-hexadecanoyl-2-(9Z-octadecenoyl)-sn-glycero-3-phospho-(1'-sn-glycerol) + H2O = 1-hexadecanoyl-sn-glycero-3-phospho-(1'-sn-glycerol) + (9Z)-octadecenoate + H(+). It carries out the reaction 1-hexadecanoyl-2-(9Z,12Z-octadecadienoyl)-sn-glycero-3-phosphoethanolamine + H2O = 1-hexadecanoyl-sn-glycero-3-phosphoethanolamine + (9Z,12Z)-octadecadienoate + H(+). The catalysed reaction is 1-hexadecanoyl-2-(5Z,8Z,11Z,14Z-eicosatetraenoyl)-sn-glycero-3-phosphoethanolamine + H2O = 1-hexadecanoyl-sn-glycero-3-phosphoethanolamine + (5Z,8Z,11Z,14Z)-eicosatetraenoate + H(+). It catalyses the reaction 1-hexadecanoyl-2-(9Z-octadecenoyl)-sn-glycero-3-phosphocholine + H2O = 1-hexadecanoyl-sn-glycero-3-phosphocholine + (9Z)-octadecenoate + H(+). The enzyme catalyses 1-hexadecanoyl-2-(9Z-octadecenoyl)-sn-glycero-3-phospho-L-serine + H2O = 1-hexadecanoyl-sn-glycero-3-phospho-L-serine + (9Z)-octadecenoate + H(+). Its function is as follows. Secretory calcium-dependent phospholipase A2 that primarily targets extracellular phospholipids. Hydrolyzes the ester bond of the fatty acyl group attached at the sn-2 position of phospholipids (phospholipase A2 activity), the catalytic efficiency decreasing in the following order: phosphatidylglycerols &gt; phosphatidylethanolamines &gt; phosphatidylcholines &gt; phosphatidylserines. May play a role in lipid mediator production in inflammatory conditions, by providing arachidonic acid to downstream cyclooxygenases and lipoxygenases. This is Group IIF secretory phospholipase A2 (PLA2G2F) from Homo sapiens (Human).